Reading from the N-terminus, the 180-residue chain is Segregation and condensation protein B (180 aa).

The protein belongs to the ScpB family. In terms of assembly, homodimer. Homodimerization may be required to stabilize the binding of ScpA to the Smc head domains. Component of a cohesin-like complex composed of ScpA, ScpB and the Smc homodimer, in which ScpA and ScpB bind to the head domain of Smc. The presence of the three proteins is required for the association of the complex with DNA.

It localises to the cytoplasm. In terms of biological role, participates in chromosomal partition during cell division. May act via the formation of a condensin-like complex containing Smc and ScpA that pull DNA away from mid-cell into both cell halves. This is Segregation and condensation protein B from Staphylococcus aureus (strain Mu3 / ATCC 700698).